The primary structure comprises 1007 residues: Beta-galactosidase A (1007 aa).

The N-terminal stretch at Met1–Gly18 is a signal peptide. Substrate-binding positions include Tyr96 and Asn140–Glu142. The N-linked (GlcNAc...) asparagine glycan is linked to Asn156. Residue Asn199 coordinates substrate. Glu200 (proton donor) is an active-site residue. Disulfide bonds link Cys205–Cys206 and Cys266–Cys315. The Nucleophile role is filled by Glu298. Tyr364 contacts substrate. Residues Asn402, Asn422, Asn478, Asn522, Asn622, Asn739, Asn760, Asn777, Asn805, and Asn914 are each glycosylated (N-linked (GlcNAc...) asparagine).

This sequence belongs to the glycosyl hydrolase 35 family.

It is found in the secreted. It carries out the reaction Hydrolysis of terminal non-reducing beta-D-galactose residues in beta-D-galactosides.. In terms of biological role, cleaves beta-linked terminal galactosyl residues from gangliosides, glycoproteins, and glycosaminoglycans. The sequence is that of Beta-galactosidase A (lacA) from Aspergillus niger (strain ATCC MYA-4892 / CBS 513.88 / FGSC A1513).